The sequence spans 378 residues: Beta sliding clamp (378 aa).

This sequence belongs to the beta sliding clamp family. Forms a ring-shaped head-to-tail homodimer around DNA which binds and tethers DNA polymerases and other proteins to the DNA. The DNA replisome complex has a single clamp-loading complex (3 tau and 1 each of delta, delta', psi and chi subunits) which binds 3 Pol III cores (1 core on the leading strand and 2 on the lagging strand) each with a beta sliding clamp dimer. Additional proteins in the replisome are other copies of gamma, psi and chi, Ssb, DNA helicase and RNA primase.

It is found in the cytoplasm. In terms of biological role, confers DNA tethering and processivity to DNA polymerases and other proteins. Acts as a clamp, forming a ring around DNA (a reaction catalyzed by the clamp-loading complex) which diffuses in an ATP-independent manner freely and bidirectionally along dsDNA. Initially characterized for its ability to contact the catalytic subunit of DNA polymerase III (Pol III), a complex, multichain enzyme responsible for most of the replicative synthesis in bacteria; Pol III exhibits 3'-5' exonuclease proofreading activity. The beta chain is required for initiation of replication as well as for processivity of DNA replication. This Streptococcus pneumoniae (strain ATCC BAA-255 / R6) protein is Beta sliding clamp (dnaN).